A 171-amino-acid polypeptide reads, in one-letter code: uncharacterized protein (171 aa).

Residues 1 to 18 form the signal peptide; it reads MRYSKLTMLIPCALLLSA. C19 carries N-palmitoyl cysteine lipidation. C19 carries S-diacylglycerol cysteine lipidation.

The protein resides in the cell membrane. This is an uncharacterized protein from Escherichia coli (strain K12).